A 473-amino-acid polypeptide reads, in one-letter code: tRNA modification GTPase MnmE (473 aa).

(6S)-5-formyl-5,6,7,8-tetrahydrofolate is bound by residues Arg-31, Glu-95, and Arg-134. The TrmE-type G domain maps to 230 to 394; it reads GVSTVIAGKP…LKQHMGDLVK (165 aa). GTP is bound by residues 240-245, 259-265, and 284-287; these read NAGKST, SHMPGTT, and DTAG. The Mg(2+) site is built by Ser-244 and Thr-265. Lys-473 provides a ligand contact to (6S)-5-formyl-5,6,7,8-tetrahydrofolate.

The protein belongs to the TRAFAC class TrmE-Era-EngA-EngB-Septin-like GTPase superfamily. TrmE GTPase family. Homodimer. Heterotetramer of two MnmE and two MnmG subunits. The cofactor is K(+).

The protein resides in the cytoplasm. In terms of biological role, exhibits a very high intrinsic GTPase hydrolysis rate. Involved in the addition of a carboxymethylaminomethyl (cmnm) group at the wobble position (U34) of certain tRNAs, forming tRNA-cmnm(5)s(2)U34. The polypeptide is tRNA modification GTPase MnmE (Chlorobaculum tepidum (strain ATCC 49652 / DSM 12025 / NBRC 103806 / TLS) (Chlorobium tepidum)).